A 911-amino-acid polypeptide reads, in one-letter code: MAASQTSQTVASHVPFADLCSTLERIQKSKGRAEKIRHFREFLDSWRKFHDAFHKNQKDVTDSFYPAMRLILPQLERERMAYGIKETMLAKLYIELLNLPRDGKDALKLLNYRTPTGTHGDAGDFAMIAYFVLKPRCLQKGSLTIQQVNDLLDSIASNNSAKRKDLIKKSLLQLITQSSALEQKWLIRMIIKDLKLGVSQQTIFSVFHSDAVELHNVTTDLEKVCRQLHDPSVGLSDISITLFSAFKPMLAAIADIEHIEKDMKHQSFYIETKLDGERMQMHKDGDVYKYFSRNGYNYTDQFGASPTEGSLTPFIHNAFKTDIQICILDGEMMAYNPNTQTFMQKGTKFDIKRMVEDSDLQTCYCVFDVLMVNNKKLGHETLRKRYEILSSIFTPIPGRIEIVQKTQAHTKNEVIDALNEAIDKREEGIMIKQPLSIYKPDKRGEGWLKIKPEYVSGLMDELDILIVGGYWGKGSRGGMMSHFLCAVAEKPPPGEKPSVFHTLSRVGSGCTMKELYDLGLKLAKYWKPFHKKAPPSSILCGTEKPEVYIEPCNSVIVQIKAAEIVPSDMYKTGCTLRFPRIEKIRDDKEWHECMTLDDLEQLRGKASGKLASKHFYVGGDDEPQEKKRKAAPKMKKVIGIIEHLKAPNLTNVNKISNIFEDVEFCVMSGTDSQPKPDLENRIAEFGGYIVQNPGPDTYCVIAGSKNIRVKNIILSNKHDVVKPAWLLECFKTKSFVPWQPHFMIHMCPSTKEHFAREYDCYGDSYFVDTDLNQLKEVFSGIKNSNEQTPEEMASLIADLEYRYSWDCSPLSMFRRHTVYLDLYAVINDLSTKNEGTRLAIKALELRFHGAKVVSCLAEGVSHVIIGEDHSRIADFKAFRRTFKRKFKILKESWITDSIDKCELQEENQYLI.

The ATP site is built by Glu271, Thr272, Lys273, Leu274, Arg278, Glu331, Lys345, Phe367, Glu427, Lys432, Lys449, and Lys451. Lys273 (N6-AMP-lysine intermediate) is an active-site residue. Glu331 is a binding site for Mg(2+). Glu427 contributes to the Mg(2+) binding site. Residues 610–620 form a required for catalytic activity region; sequence LASKHFYVGGD. BRCT domains lie at 654–743 and 808–911; these read KISN…PHFM and SPLS…QYLI.

Belongs to the ATP-dependent DNA ligase family. As to quaternary structure, interacts with XRCC4; the LIG4-XRCC4 subcomplex has a 1:2 stoichiometry and XRCC4 is required for LIG4 stability. Component of the core long-range non-homologous end joining (NHEJ) complex (also named DNA-PK complex) composed of PRKDC, LIG4, XRCC4, XRCC6/Ku70, XRCC5/Ku86 and NHEJ1/XLF. Additional component of the NHEJ complex includes PAXX. Following autophosphorylation, PRKDC dissociates from DNA, leading to formation of the short-range NHEJ complex, composed of LIG4, XRCC4, XRCC6/Ku70, XRCC5/Ku86 and NHEJ1/XLF. Interacts with DCLRE1C; the interaction is direct. Interacts with APLF. It depends on Mg(2+) as a cofactor.

The protein resides in the nucleus. The enzyme catalyses ATP + (deoxyribonucleotide)n-3'-hydroxyl + 5'-phospho-(deoxyribonucleotide)m = (deoxyribonucleotide)n+m + AMP + diphosphate.. Its function is as follows. DNA ligase involved in DNA non-homologous end joining (NHEJ); required for double-strand break (DSB) repair and V(D)J recombination. Catalyzes the NHEJ ligation step of the broken DNA during DSB repair by resealing the DNA breaks after the gap filling is completed. Joins single-strand breaks in a double-stranded polydeoxynucleotide in an ATP-dependent reaction. LIG4 is mechanistically flexible: it can ligate nicks as well as compatible DNA overhangs alone, while in the presence of XRCC4, it can ligate ends with 2-nucleotides (nt) microhomology and 1-nt gaps. Forms a subcomplex with XRCC4; the LIG4-XRCC4 subcomplex is responsible for the NHEJ ligation step and XRCC4 enhances the joining activity of LIG4. Binding of the LIG4-XRCC4 complex to DNA ends is dependent on the assembly of the DNA-dependent protein kinase complex DNA-PK to these DNA ends. LIG4 regulates nuclear localization of XRCC4. In Pongo abelii (Sumatran orangutan), this protein is DNA ligase 4.